The sequence spans 153 residues: Small ribosomal subunit protein bS16 (153 aa).

Basic and acidic residues predominate over residues 121-131 (AEAAAKAKAEA). The tract at residues 121–153 (AEAAAKAKAEAEAAAAAEEAPAEEAAEEAPAED) is disordered. A compositionally biased stretch (acidic residues) spans 140–153 (APAEEAAEEAPAED).

This sequence belongs to the bacterial ribosomal protein bS16 family.

The protein is Small ribosomal subunit protein bS16 of Bifidobacterium longum (strain DJO10A).